Here is a 276-residue protein sequence, read N- to C-terminus: MKTSKTKPPKSVLIAGPCVIESLENLRSIAIKLQPLANNERLDFYFKASFDKANRTSLESYRGPGLEKGLEMLQIIKEEFGYKILTDVHESYQASVAAKVADILQIPAFLCRQTDLIVEVSQTNAIINIKKGQFMNPKDMQYSVLKALKTRDSSIQSPTYETALKNGVWLCERGSSFGYGNLVVDMRSLTIMREFAPVIFDATHSVQMPGGANGKSSGDSSFAPILARAAAAVGIDGLFAETHVDPKNALSDGANMLKPDELERLVTDMLKIQNLF.

This sequence belongs to the KdsA family.

The protein localises to the cytoplasm. It carries out the reaction D-arabinose 5-phosphate + phosphoenolpyruvate + H2O = 3-deoxy-alpha-D-manno-2-octulosonate-8-phosphate + phosphate. It participates in carbohydrate biosynthesis; 3-deoxy-D-manno-octulosonate biosynthesis; 3-deoxy-D-manno-octulosonate from D-ribulose 5-phosphate: step 2/3. Its pathway is bacterial outer membrane biogenesis; lipopolysaccharide biosynthesis. This chain is 2-dehydro-3-deoxyphosphooctonate aldolase, found in Helicobacter pylori (strain HPAG1).